Reading from the N-terminus, the 582-residue chain is tRNA(Ile)-lysidine synthase (582 aa).

46 to 51 (SGGADS) is an ATP binding site. The CMP/dCMP-type deaminase domain occupies 402–525 (DPLHAAMGEA…DLLADHWGWR (124 aa)). Residues 548 to 582 (VRRRSADTPQTPNAETPAPRSSRSTSASGKPTMLE) form a disordered region. The segment covering 563 to 575 (TPAPRSSRSTSAS) has biased composition (low complexity).

Belongs to the tRNA(Ile)-lysidine synthase family.

It localises to the cytoplasm. The catalysed reaction is cytidine(34) in tRNA(Ile2) + L-lysine + ATP = lysidine(34) in tRNA(Ile2) + AMP + diphosphate + H(+). Ligates lysine onto the cytidine present at position 34 of the AUA codon-specific tRNA(Ile) that contains the anticodon CAU, in an ATP-dependent manner. Cytidine is converted to lysidine, thus changing the amino acid specificity of the tRNA from methionine to isoleucine. The chain is tRNA(Ile)-lysidine synthase from Deinococcus radiodurans (strain ATCC 13939 / DSM 20539 / JCM 16871 / CCUG 27074 / LMG 4051 / NBRC 15346 / NCIMB 9279 / VKM B-1422 / R1).